The chain runs to 195 residues: Morphogenetic protein (195 aa).

Assembly factor active in membrane morphogenesis. This Pseudomonas phage phi6 (Bacteriophage phi-6) protein is Morphogenetic protein (P12).